A 160-amino-acid polypeptide reads, in one-letter code: Endoribonuclease YbeY (160 aa).

Residues H125, H129, and H135 each coordinate Zn(2+).

This sequence belongs to the endoribonuclease YbeY family. The cofactor is Zn(2+).

The protein localises to the cytoplasm. Single strand-specific metallo-endoribonuclease involved in late-stage 70S ribosome quality control and in maturation of the 3' terminus of the 16S rRNA. The polypeptide is Endoribonuclease YbeY (Leuconostoc citreum (strain KM20)).